The primary structure comprises 374 residues: Chaperone protein DnaJ (374 aa).

The region spanning 5 to 70 (DYYEVLGVNL…RKRASYDQFG (66 aa)) is the J domain. The CR-type zinc finger occupies 133–210 (GLSRTIKVPT…CHGQGRQQQT (78 aa)). Cys-146, Cys-149, Cys-162, Cys-165, Cys-184, Cys-187, Cys-198, and Cys-201 together coordinate Zn(2+). 4 CXXCXGXG motif repeats span residues 146–153 (CKTCNGSG), 162–169 (CPRCNGSG), 184–191 (CSVCRGRG), and 198–205 (CTDCHGQG).

The protein belongs to the DnaJ family. In terms of assembly, homodimer. The cofactor is Zn(2+).

The protein localises to the cytoplasm. Functionally, participates actively in the response to hyperosmotic and heat shock by preventing the aggregation of stress-denatured proteins and by disaggregating proteins, also in an autonomous, DnaK-independent fashion. Unfolded proteins bind initially to DnaJ; upon interaction with the DnaJ-bound protein, DnaK hydrolyzes its bound ATP, resulting in the formation of a stable complex. GrpE releases ADP from DnaK; ATP binding to DnaK triggers the release of the substrate protein, thus completing the reaction cycle. Several rounds of ATP-dependent interactions between DnaJ, DnaK and GrpE are required for fully efficient folding. Also involved, together with DnaK and GrpE, in the DNA replication of plasmids through activation of initiation proteins. The chain is Chaperone protein DnaJ from Coxiella burnetii (strain RSA 493 / Nine Mile phase I).